We begin with the raw amino-acid sequence, 286 residues long: Probable xyloglucan endotransglucosylase/hydrolase protein 23 (286 aa).

An N-terminal signal peptide occupies residues methionine 1–alanine 24. Positions asparagine 25–tyrosine 214 constitute a GH16 domain. The active-site Nucleophile is glutamate 100. Catalysis depends on glutamate 104, which acts as the Proton donor. A xyloglucan-binding site is contributed by glutamate 104. Asparagine 108 carries an N-linked (GlcNAc...) asparagine glycan. Residues histidine 117 to asparagine 119, aspartate 127 to glutamate 129, glutamate 193 to tryptophan 194, and glycine 198 each bind xyloglucan. Cysteine 222 and cysteine 231 form a disulfide bridge. A glycan (N-linked (GlcNAc...) asparagine) is linked at asparagine 233. Cysteine 269 and cysteine 283 form a disulfide bridge. Arginine 274 provides a ligand contact to xyloglucan.

This sequence belongs to the glycosyl hydrolase 16 family. XTH group 2 subfamily. Post-translationally, contains at least one intrachain disulfide bond essential for its enzymatic activity.

The protein localises to the secreted. Its subcellular location is the cell wall. It localises to the extracellular space. It is found in the apoplast. The catalysed reaction is breaks a beta-(1-&gt;4) bond in the backbone of a xyloglucan and transfers the xyloglucanyl segment on to O-4 of the non-reducing terminal glucose residue of an acceptor, which can be a xyloglucan or an oligosaccharide of xyloglucan.. In terms of biological role, catalyzes xyloglucan endohydrolysis (XEH) and/or endotransglycosylation (XET). Cleaves and religates xyloglucan polymers, an essential constituent of the primary cell wall, and thereby participates in cell wall construction of growing tissues. The polypeptide is Probable xyloglucan endotransglucosylase/hydrolase protein 23 (XTH23) (Arabidopsis thaliana (Mouse-ear cress)).